A 223-amino-acid polypeptide reads, in one-letter code: Ribonuclease T (223 aa).

The region spanning 20–195 (VVIDVETAGF…YDTERTAELF (176 aa)) is the Exonuclease domain. Mg(2+) is bound by residues Asp-23, Glu-25, His-182, and Asp-187. The Proton donor/acceptor role is filled by His-182.

The protein belongs to the RNase T family. As to quaternary structure, homodimer. Requires Mg(2+) as cofactor.

Functionally, trims short 3' overhangs of a variety of RNA species, leaving a one or two nucleotide 3' overhang. Responsible for the end-turnover of tRNA: specifically removes the terminal AMP residue from uncharged tRNA (tRNA-C-C-A). Also appears to be involved in tRNA biosynthesis. The chain is Ribonuclease T from Photobacterium profundum (strain SS9).